The primary structure comprises 47 residues: Bacteriocin curvaticin DN317 (47 aa).

Belongs to the bacteriocin class IIA/YGNGV family.

Its subcellular location is the secreted. In terms of biological role, has bactericidal activity against various Gram-negative Campylobacter, and the Gram-positive L.monocytogenes and B.subtilis. In vitro, inhibits C.jejuni strain ATCC 33560 (MIC=27.3 ug/ml). The chain is Bacteriocin curvaticin DN317 from Latilactobacillus curvatus (Lactobacillus curvatus).